Here is an 82-residue protein sequence, read N- to C-terminus: Large ribosomal subunit protein bL31B (82 aa).

It belongs to the bacterial ribosomal protein bL31 family. Type B subfamily. In terms of assembly, part of the 50S ribosomal subunit after the end of exponential growth.

Its function is as follows. While neither of the L31 paralogs is essential, this protein does not seem to function as the main L31 protein. Has a higher affinity for 70S ribosomes than the zinc-containing L31 paralog; is able to displace it to varying extents, even under zinc-replete conditions. The sequence is that of Large ribosomal subunit protein bL31B (rpmE2) from Bacillus subtilis (strain 168).